The sequence spans 462 residues: Glycine--tRNA ligase (462 aa).

Substrate-binding residues include Arg-94 and Glu-143. Residues 175 to 177 (RNE), 185 to 190 (FRTCEF), 259 to 260 (EL), and 308 to 311 (GLTR) contribute to the ATP site. 190–194 (FEQME) contacts substrate. Residue 304–308 (ETSAG) coordinates substrate.

It belongs to the class-II aminoacyl-tRNA synthetase family. In terms of assembly, homodimer.

It localises to the cytoplasm. The enzyme catalyses tRNA(Gly) + glycine + ATP = glycyl-tRNA(Gly) + AMP + diphosphate. In terms of biological role, catalyzes the attachment of glycine to tRNA(Gly). The polypeptide is Glycine--tRNA ligase (Treponema pallidum (strain Nichols)).